A 513-amino-acid chain; its full sequence is Xylose import ATP-binding protein XylG (513 aa).

ABC transporter domains lie at 5-242 (LEMK…VGRE) and 259-505 (LRIE…LRSE). Residue 37–44 (GENGSGKS) participates in ATP binding.

This sequence belongs to the ABC transporter superfamily. Xylose importer (TC 3.A.1.2.4) family. The complex is composed of two ATP-binding proteins (XylG), two transmembrane proteins (XylH) and a solute-binding protein (XylF).

The protein resides in the cell inner membrane. The enzyme catalyses D-xylose(out) + ATP + H2O = D-xylose(in) + ADP + phosphate + H(+). Part of the ABC transporter complex XylFGH involved in xylose import. Responsible for energy coupling to the transport system. This chain is Xylose import ATP-binding protein XylG, found in Escherichia coli O6:K15:H31 (strain 536 / UPEC).